The chain runs to 2590 residues: 5-methylorsellinic acid synthase (2590 aa).

Residues 6 to 255 form an N-terminal acylcarrier protein transacylase domain (SAT) region; the sequence is LLCGSQAIQW…HNQVNRELFA (250 aa). A Ketosynthase family 3 (KS3) domain is found at 369–784; that stretch reads GDSIAIVGMG…GSNAALIVTQ (416 aa). Catalysis depends on for beta-ketoacyl synthase activity residues Cys534, His669, and His707. The tract at residues 891 to 1191 is malonyl-CoA:ACP transacylase (MAT) domain; it reads LAFGGQTGNV…HAVNLGGPEP (301 aa). Ser978 serves as the catalytic For acyl/malonyl transferase activity. An N-terminal hotdog fold region spans residues 1263–1393; sequence PKLVSFVKYL…GTVNISSLTS (131 aa). Positions 1263–1569 constitute a PKS/mFAS DH domain; that stretch reads PKLVSFVKYL…FAKVPTASLK (307 aa). A product template (PT) domain region spans residues 1267–1568; sequence SFVKYLDSNR…RFAKVPTASL (302 aa). His1297 (proton acceptor; for dehydratase activity) is an active-site residue. The interval 1421-1569 is C-terminal hotdog fold; that stretch reads TSAIQGSLVY…FAKVPTASLK (149 aa). The active-site Proton donor; for dehydratase activity is the Asp1481. Residues 1587–1612 are disordered; sequence LKVTEPSANVPKAQPVSTYPKPMKPA. Carrier domains lie at 1617 to 1691 and 1736 to 1812; these read AQIR…ASGT and SAQA…IPKP. 2 positions are modified to O-(pantetheine 4'-phosphoryl)serine: Ser1651 and Ser1772. The interval 1980–2212 is methyltransferase (CMeT) domain; the sequence is QHRGEHKLLN…GFRHVDWSDD (233 aa). A thioesterase (TE) domain region spans residues 2282–2590; that stretch reads LMIHGGGHIM…EGYEFLLRHL (309 aa).

The enzyme catalyses 3 malonyl-CoA + acetyl-CoA + S-adenosyl-L-methionine + H(+) = 5-methylorsellinate + S-adenosyl-L-homocysteine + 3 CO2 + 4 CoA. It functions in the pathway secondary metabolite biosynthesis. Functionally, non-reducing polyketide synthase; part of the cluster A that mediates the biosynthesis of azasperpyranones, members of the azaphilone family that exhibit anti-cancer activities. Azasperpyranones are synthesized by 2 clusters, A and B. Cluster A is responsible for the production of the polyhydric phenol moiety while the azaphilonoid scaffold is produced by the cluster B. The non-reducing polyketide synthase ATEG_03629 produces 5-methyl orsellinic acid, which is then reduced to 5-methyl orsellinic aldehyde by the NRPS-like protein ATEG_03630. 5-methyl orsellinic aldehyde is then first hydroxylated by the FAD-dependent monooxygenase ATEG_03635 and subsequently hydroxylated by the cytochrome P450 monooxygenase ATEG_03631 to produce the unstable polyhydric phenol precursor of azasperpyranones. On the other hand, the polyketide synthase ATEG_07659 is responsible for producing the 3,5-dimethyloctadienone moiety from acetyl-CoA, three malonyl-CoA, and two S-adenosyl methionines (SAM). The 3,5-dimethyloctadienone moiety is then loaded onto the SAT domain of ATEG_07661 and extended with four malonyl-CoA and one SAM, which leads to the formation of 2,4-dihydroxy-6-(5,7-dimethyl-2-oxo-trans-3-trans-5-nonadienyl)-3-methylbenzaldehyde (compound 8) after reductive release and aldol condensation. The FAD-dependent monooxygenase ATEG_07662 is the next enzyme in the biosynthesis sequence and hydroxylates the side chain at the benzylic position of compound 8. In Aspergillus nidulans, afoF, the ortholog of the FAD-dependent oxygenase ATEG_07660, is the key enzyme for the biosynthesis of asperfuranone by catalyzing the hydroxylation at C-8 of to prevent the formation of a six-membered ring hemiacetal intermediate and thus facilitating the formation of a five-membered ring to produce asperfuranone. In Aspergillus terreus, ATEG_07660 is probably not functional, which leads to the formation of the six-membered ring hemiacetal intermediate presperpyranone instead of asperfuranone. Finally, ATEG_03636 is involved in the condensation of the polyhydric phenol moiety produced by cluster A and the perasperpyranone precursor produced by cluster B, to yield azasperpyranone A. Further modifications of azasperpyranone A result in the production of derivatives, including azasperpyranone B to F. The chain is 5-methylorsellinic acid synthase from Aspergillus terreus (strain NIH 2624 / FGSC A1156).